The chain runs to 366 residues: tRNA/tmRNA (uracil-C(5))-methyltransferase (366 aa).

S-adenosyl-L-methionine contacts are provided by glutamine 190, tyrosine 218, asparagine 223, glutamate 239, and aspartate 299. Catalysis depends on cysteine 324, which acts as the Nucleophile. Glutamate 358 functions as the Proton acceptor in the catalytic mechanism.

It belongs to the class I-like SAM-binding methyltransferase superfamily. RNA M5U methyltransferase family. TrmA subfamily.

It catalyses the reaction uridine(54) in tRNA + S-adenosyl-L-methionine = 5-methyluridine(54) in tRNA + S-adenosyl-L-homocysteine + H(+). The enzyme catalyses uridine(341) in tmRNA + S-adenosyl-L-methionine = 5-methyluridine(341) in tmRNA + S-adenosyl-L-homocysteine + H(+). Its function is as follows. Dual-specificity methyltransferase that catalyzes the formation of 5-methyluridine at position 54 (m5U54) in all tRNAs, and that of position 341 (m5U341) in tmRNA (transfer-mRNA). In Enterobacter sp. (strain 638), this protein is tRNA/tmRNA (uracil-C(5))-methyltransferase.